We begin with the raw amino-acid sequence, 208 residues long: Nascent polypeptide-associated complex subunit alpha (208 aa).

Positions M1–V19 are enriched in basic and acidic residues. Disordered stretches follow at residues M1–N50 and Q120–A166. The segment covering D21–E34 has biased composition (acidic residues). The region spanning S48–A113 is the NAC-A/B domain. Over residues Q120–E131 the composition is skewed to low complexity. Residues H132–K154 show a composition bias toward basic and acidic residues. The span at D155–F164 shows a compositional bias: acidic residues. Residues L169–V208 enclose the UBA domain.

It belongs to the NAC-alpha family. As to quaternary structure, part of the nascent polypeptide-associated complex (NAC), consisting of EGD2 and EGD1. NAC associates with ribosomes via EGD1.

The protein localises to the cytoplasm. It localises to the nucleus. Functionally, component of the nascent polypeptide-associated complex (NAC), a dynamic component of the ribosomal exit tunnel, protecting the emerging polypeptides from interaction with other cytoplasmic proteins to ensure appropriate nascent protein targeting. The NAC complex also promotes mitochondrial protein import by enhancing productive ribosome interactions with the outer mitochondrial membrane and blocks the inappropriate interaction of ribosomes translating non-secretory nascent polypeptides with translocation sites in the membrane of the endoplasmic reticulum. EGD2 may also be involved in transcription regulation. The chain is Nascent polypeptide-associated complex subunit alpha (EGD2) from Ajellomyces capsulatus (strain NAm1 / WU24) (Darling's disease fungus).